We begin with the raw amino-acid sequence, 133 residues long: IgW chain C region, secreted form 2 (133 aa).

The Ig-like domain maps to 1 to 71; the sequence is VISGFYPDSV…TGSRFNDRIS (71 aa). N-linked (GlcNAc...) asparagine glycans are attached at residues Asn32 and Asn112. Residues 76–133 are secretory tail; it reads KGGTVNLPVPGGNTPCTCPPSSCSGCMPKLVYQTDLNVTLENGGQLQYNCHQQACKIK.

Expressed mainly in lymphoid tissues including spleen, epigonal organ and circulating lymphocytes.

It is found in the secreted. The polypeptide is IgW chain C region, secreted form 2 (Heterodontus francisci (Horn shark)).